The primary structure comprises 1024 residues: Beta-galactosidase (1024 aa).

2 residues coordinate substrate: N103 and D202. D202 provides a ligand contact to Na(+). E417, H419, and E462 together coordinate Mg(2+). Residues E462 and 538 to 541 (EYAH) each bind substrate. Residue E462 is the Proton donor of the active site. The active-site Nucleophile is E538. Position 598 (N598) interacts with Mg(2+). Na(+) is bound by residues F602 and N605. Residues N605 and W1000 each contribute to the substrate site.

Belongs to the glycosyl hydrolase 2 family. In terms of assembly, homotetramer. It depends on Mg(2+) as a cofactor. Requires Na(+) as cofactor.

It carries out the reaction Hydrolysis of terminal non-reducing beta-D-galactose residues in beta-D-galactosides.. This is Beta-galactosidase from Escherichia coli O127:H6 (strain E2348/69 / EPEC).